The chain runs to 216 residues: Ribose-5-phosphate isomerase A (216 aa).

Substrate contacts are provided by residues 26–29 (TGST), 79–82 (DGAD), and 92–95 (KGGG). The active-site Proton acceptor is the glutamate 101. Lysine 119 serves as a coordination point for substrate.

The protein belongs to the ribose 5-phosphate isomerase family. Homodimer.

It carries out the reaction aldehydo-D-ribose 5-phosphate = D-ribulose 5-phosphate. It functions in the pathway carbohydrate degradation; pentose phosphate pathway; D-ribose 5-phosphate from D-ribulose 5-phosphate (non-oxidative stage): step 1/1. In terms of biological role, catalyzes the reversible conversion of ribose-5-phosphate to ribulose 5-phosphate. The protein is Ribose-5-phosphate isomerase A of Legionella pneumophila (strain Corby).